A 446-amino-acid polypeptide reads, in one-letter code: Minor fimbrium tip subunit Mfa3 (446 aa).

The N-terminal stretch at 1 to 20 (MMQLKKRYFALILLLFLWSG) is a signal peptide. The N-palmitoyl cysteine moiety is linked to residue C21. Residue C21 is the site of S-diacylglycerol cysteine attachment. The propeptide occupies 21–43 (CDRGVDPQPDPLQPDVYLLVNAR).

This sequence belongs to the bacteroidetes fimbrillin superfamily. FimB/Mfa2 family. Component of the fimbrium tip. Minor fimbriae are composed of a structural subunit, most often Mfa1, and the accessory subunits Mfa3, Mfa4 and Mfa5. Fimbrium assembly occurs by linear, head-to-tail oligomerization of fimbrial subunits. This is mediated via insertion of a C-terminal beta-strand from one subunit into a groove in the N-terminal domain of the following subunit. Mfa3 is required for Mfa4 and Mfa5 insertion into the fimbrium.

It is found in the fimbrium. It localises to the cell outer membrane. Functionally, tip subunit of the minor fimbriae. These filamentous pili are attached to the cell surface; they mediate biofilm formation, adhesion onto host cells and onto other bacteria that are part of the oral microbiome. They play an important role in invasion of periodontal tissues and are recognized as major virulence factors. Fimbrium subunits from different strains have highly divergent sequences, and this correlates with pathogenicity. In Porphyromonas gingivalis (strain ATCC 33277 / DSM 20709 / CIP 103683 / JCM 12257 / NCTC 11834 / 2561), this protein is Minor fimbrium tip subunit Mfa3 (mfa3).